The sequence spans 77 residues: Cytoplasmic envelopment protein 3 (77 aa).

Glycine 2 carries N-myristoyl glycine; by host lipidation.

The protein belongs to the herpesviridae cytoplasmic envelopment protein 3 family. As to quaternary structure, interacts with cytoplasmic envelopment protein 2; this interaction is essential for the proper localization of each protein to the assembly complex and thus for the production of infectious virus. In terms of processing, myristoylation and palmitoylation (probably on one or more of the nearby cysteines at the N-terminus) enable membrane-binding and Golgi apparatus-specific targeting and are essential for efficient packaging. Post-translationally, phosphorylated. Phosphorylation does not seem to be required for recycling to the host Golgi apparatus. Packaging is selective for underphosphorylated forms.

The protein resides in the virion tegument. It is found in the virion membrane. Its subcellular location is the host cell membrane. The protein localises to the host Golgi apparatus membrane. Functionally, plays an important role in the cytoplasmic envelopment of tegument proteins and capsids during the assembly and egress processes. Also participates in viral entry at the fusion step probably by regulating the core fusion machinery. The polypeptide is Cytoplasmic envelopment protein 3 (U71) (Human herpesvirus 6A (strain Uganda-1102) (HHV-6 variant A)).